Here is a 212-residue protein sequence, read N- to C-terminus: Deoxyribose-phosphate aldolase (212 aa).

Catalysis depends on Asp89, which acts as the Proton donor/acceptor. Catalysis depends on Lys151, which acts as the Schiff-base intermediate with acetaldehyde. Catalysis depends on Lys180, which acts as the Proton donor/acceptor.

The protein belongs to the DeoC/FbaB aldolase family. DeoC type 1 subfamily.

The protein resides in the cytoplasm. The catalysed reaction is 2-deoxy-D-ribose 5-phosphate = D-glyceraldehyde 3-phosphate + acetaldehyde. Its pathway is carbohydrate degradation; 2-deoxy-D-ribose 1-phosphate degradation; D-glyceraldehyde 3-phosphate and acetaldehyde from 2-deoxy-alpha-D-ribose 1-phosphate: step 2/2. In terms of biological role, catalyzes a reversible aldol reaction between acetaldehyde and D-glyceraldehyde 3-phosphate to generate 2-deoxy-D-ribose 5-phosphate. The protein is Deoxyribose-phosphate aldolase of Clostridium botulinum (strain Okra / Type B1).